Here is a 398-residue protein sequence, read N- to C-terminus: S-adenosylmethionine synthase (398 aa).

Histidine 15 serves as a coordination point for ATP. Residue aspartate 17 participates in Mg(2+) binding. Residue glutamate 43 coordinates K(+). Residues glutamate 56 and glutamine 99 each coordinate L-methionine. The interval 99 to 109 (QSPDIAQGVDT) is flexible loop. ATP-binding positions include 175–177 (DGK), 243–244 (RF), aspartate 252, 258–259 (RK), alanine 275, and lysine 279. Aspartate 252 serves as a coordination point for L-methionine. Residue lysine 283 participates in L-methionine binding.

It belongs to the AdoMet synthase family. In terms of assembly, homotetramer; dimer of dimers. Mg(2+) serves as cofactor. Requires K(+) as cofactor.

It is found in the cytoplasm. The catalysed reaction is L-methionine + ATP + H2O = S-adenosyl-L-methionine + phosphate + diphosphate. Its pathway is amino-acid biosynthesis; S-adenosyl-L-methionine biosynthesis; S-adenosyl-L-methionine from L-methionine: step 1/1. Catalyzes the formation of S-adenosylmethionine (AdoMet) from methionine and ATP. The overall synthetic reaction is composed of two sequential steps, AdoMet formation and the subsequent tripolyphosphate hydrolysis which occurs prior to release of AdoMet from the enzyme. The polypeptide is S-adenosylmethionine synthase (Parafrankia sp. (strain EAN1pec)).